A 319-amino-acid polypeptide reads, in one-letter code: NADH-ubiquinone oxidoreductase chain 1 (319 aa).

8 helical membrane passes run 5–25 (TINSLMYIIPILIAVAFLTLM), 72–92 (LLISSPILALTTAMLIWTPIP), 102–122 (LGLLSILAISSMAVNSILWAG), 146–166 (VTLGIILLSILILTGGFTMQL), 173–193 (FTWLLTTSWPLAMMWFISTLA), 225–245 (FFLTEYANIIVMNLLTCILFI), 254–274 (ELFLINLITKTMILSLSFLWI), and 295–315 (LPLTMSLCLLHTSLPISTSGI).

This sequence belongs to the complex I subunit 1 family.

It localises to the mitochondrion inner membrane. It carries out the reaction a ubiquinone + NADH + 5 H(+)(in) = a ubiquinol + NAD(+) + 4 H(+)(out). Core subunit of the mitochondrial membrane respiratory chain NADH dehydrogenase (Complex I) that is believed to belong to the minimal assembly required for catalysis. Complex I functions in the transfer of electrons from NADH to the respiratory chain. The immediate electron acceptor for the enzyme is believed to be ubiquinone. The sequence is that of NADH-ubiquinone oxidoreductase chain 1 (MT-ND1) from Varanus flavescens (Yellow monitor).